The following is a 393-amino-acid chain: 2-nitroimidazole transporter (393 aa).

Over 1-12 the chain is Cytoplasmic; sequence MTCSTSLSGKNR. The helical transmembrane segment at 13–33 threads the bilayer; sequence IVLIAGILMIATTLRVTFTGA. Residues 34 to 52 are Periplasmic-facing; it reads APLLDTIRSAYSLTTAQTG. The chain crosses the membrane as a helical span at residues 53-73; it reads LLTTLPLLAFALISPLAAPVA. The Cytoplasmic segment spans residues 74 to 80; that stretch reads RRFGMER. The next 2 membrane-spanning stretches (helical) occupy residues 81–101 and 102–122; these read SLFA…LPSP and YLLF…NVLL. Over 123–140 the chain is Cytoplasmic; that stretch reads PGLIKRDFPHSVARLTGA. Residues 141-161 form a helical membrane-spanning segment; that stretch reads YSLTMGAAAALGSAMVVPLAL. At 162–163 the chain is on the periplasmic side; sequence NG. A helical transmembrane segment spans residues 164 to 184; the sequence is FGWQGALLMLMCFPLLALFLW. Residues 185-218 lie on the Cytoplasmic side of the membrane; sequence LPQWRSQQHANLSTSRALHTRGIWRSPLAWQVTL. Residues 219-239 form a helical membrane-spanning segment; that stretch reads FLGINSLVYYVIIGWLPAILI. The Periplasmic segment spans residues 240 to 249; that stretch reads SHGYSEAQAG. Residues 250–270 form a helical membrane-spanning segment; the sequence is SLHGLLQLATAAPGLLIPLFL. Residues 271–278 are Cytoplasmic-facing; it reads HHVKDQRG. A helical membrane pass occupies residues 279–299; that stretch reads IAAFVALMCAVGAVGLCFMPA. At 300–304 the chain is on the periplasmic side; the sequence is HAITW. Residues 305-325 traverse the membrane as a helical segment; the sequence is TLLFGFGSGATMILGLTFIGL. Topologically, residues 326–334 are cytoplasmic; it reads RASSAHQAA. The helical transmembrane segment at 335–355 threads the bilayer; that stretch reads ALSGMAQSVGYLLAACGPPLM. At 356–366 the chain is on the periplasmic side; that stretch reads GKIHDANGNWS. The chain crosses the membrane as a helical span at residues 367 to 387; that stretch reads VPLMGVAILSLLMAIFGLCAG. Residues 388–393 are Cytoplasmic-facing; sequence RDKEIR.

It belongs to the major facilitator superfamily. Cyanate porter (TC 2.A.1.17) family.

It is found in the cell inner membrane. In terms of biological role, involved in efflux of 2-nitroimidazole. In Escherichia coli (strain K12), this protein is 2-nitroimidazole transporter.